Here is a 1184-residue protein sequence, read N- to C-terminus: Protocadherin-12 (1184 aa).

An N-terminal signal peptide occupies residues 1 to 24 (MMQLLQLLLGLLGPGGYLFLLGDC). Topologically, residues 25 to 718 (QEVTTLTVKY…PGALSMSMLT (694 aa)) are extracellular. 5 Cadherin domains span residues 28–135 (TTLT…QPRF), 136–244 (PKGE…SPAF), 245–352 (AESS…IPSI), 355–460 (TWAS…APVF), and 461–565 (EKSR…APEV). N415 carries N-linked (GlcNAc...) asparagine glycosylation. 3 N-linked (GlcNAc...) asparagine glycosylation sites follow: N582, N659, and N662. Residues 600 to 711 (PAGTDTPPLA…LRDSARKPGA (112 aa)) form the Cadherin 6 domain. A helical membrane pass occupies residues 719–739 (VICLAVLLGIFGLILALFMSI). Over 740–1184 (CRTEKKDNRA…RGSSSSSRCL (445 aa)) the chain is Cytoplasmic. 2 disordered regions span residues 854–928 (RQRN…ESGP) and 973–1023 (QFQP…DPEE). Residue S859 is modified to Phosphoserine. Residues 1012-1023 (PEQEEGPLDPEE) show a composition bias toward acidic residues. S1062 bears the Phosphoserine mark. The disordered stretch occupies residues 1153 to 1184 (SAASGMKVQGDPGGKTGTEGKSRGSSSSSRCL). The span at 1175-1184 (RGSSSSSRCL) shows a compositional bias: low complexity.

Cleaved by ADAM10 close to the transmembrane domain to release the Protocadherin-12, secreted form in the serum. Cleavage results in reduced cellular adhesion in a cell migration assay. As to expression, expressed in highly vascularized tissues including the heart and placenta, but most tissues contain a low level of expression. Prominent expression in the spleen. Present in villous and extravillous trophoblast (at protein level).

The protein localises to the cell membrane. It localises to the cell junction. The protein resides in the secreted. Its function is as follows. Cellular adhesion molecule that may play an important role in cell-cell interactions at interendothelial junctions. Acts as a regulator of cell migration, probably via increasing cell-cell adhesion. Promotes homotypic calcium-dependent aggregation and adhesion and clusters at intercellular junctions. Unable to bind to catenins, weakly associates with the cytoskeleton. The chain is Protocadherin-12 from Homo sapiens (Human).